Consider the following 448-residue polypeptide: MNKTIDITLSPHWEDRISNEQKLRRNDQRSVFQRDRARILHSAAFRRLQAKTQVHGPGSANDFYRTRLTHSLEVSQIGTGIVAQLKLRQPEFRHLLTSTSLMESICLAHDIGHPPFGHGGEIALNYMMRNHGGFEGNGQTLRILSKLEPYTEHFGMNLARRTLMGVLKYPAFLDQVHSKYRPDDVTNLRHLKSIEWHPPKGIYRDDESILHWITAPLSEADKTLFSTFRFQKENDKVHKKTRFKSIDCSIMELADDIAYGIHDLEDAIVMGIVTRNQWQESVASKLAECGDEWFEAHINNIGDKLFSGLQYQRKDGIGGMVNALLTSITIQKSTFEEEQSFESELLKWNAYLSPSMSYALNILKKFVGQYVIHNSEMQRIEYKGQQIVMEIFDALNSDPERLLPENDKREWREAKESGTNHHRIIADYIAGMTDGYAQRLYNQLFVPI.

One can recognise an HD domain in the interval arginine 67 to glycine 260.

This sequence belongs to the dGTPase family. Type 2 subfamily.

The polypeptide is Deoxyguanosinetriphosphate triphosphohydrolase-like protein (Aliivibrio salmonicida (strain LFI1238) (Vibrio salmonicida (strain LFI1238))).